Reading from the N-terminus, the 423-residue chain is Histidine--tRNA ligase (423 aa).

This sequence belongs to the class-II aminoacyl-tRNA synthetase family. Homodimer.

Its subcellular location is the cytoplasm. The enzyme catalyses tRNA(His) + L-histidine + ATP = L-histidyl-tRNA(His) + AMP + diphosphate + H(+). The chain is Histidine--tRNA ligase (hisS) from Haemophilus influenzae (strain ATCC 51907 / DSM 11121 / KW20 / Rd).